The primary structure comprises 233 residues: 2,3,4,5-tetrahydropyridine-2,6-dicarboxylate N-acetyltransferase (233 aa).

It belongs to the transferase hexapeptide repeat family. DapH subfamily.

It carries out the reaction (S)-2,3,4,5-tetrahydrodipicolinate + acetyl-CoA + H2O = L-2-acetamido-6-oxoheptanedioate + CoA. It functions in the pathway amino-acid biosynthesis; L-lysine biosynthesis via DAP pathway; LL-2,6-diaminopimelate from (S)-tetrahydrodipicolinate (acetylase route): step 1/3. Its function is as follows. Catalyzes the transfer of an acetyl group from acetyl-CoA to tetrahydrodipicolinate. The polypeptide is 2,3,4,5-tetrahydropyridine-2,6-dicarboxylate N-acetyltransferase (Petrotoga mobilis (strain DSM 10674 / SJ95)).